A 241-amino-acid polypeptide reads, in one-letter code: Glucosamine-6-phosphate deaminase (241 aa).

Aspartate 67 functions as the Proton acceptor; for enolization step in the catalytic mechanism. Catalysis depends on asparagine 136, which acts as the For ring-opening step. The Proton acceptor; for ring-opening step role is filled by histidine 138. Residue glutamate 143 is the For ring-opening step of the active site.

Belongs to the glucosamine/galactosamine-6-phosphate isomerase family. NagB subfamily.

It catalyses the reaction alpha-D-glucosamine 6-phosphate + H2O = beta-D-fructose 6-phosphate + NH4(+). It functions in the pathway amino-sugar metabolism; N-acetylneuraminate degradation; D-fructose 6-phosphate from N-acetylneuraminate: step 5/5. Catalyzes the reversible isomerization-deamination of glucosamine 6-phosphate (GlcN6P) to form fructose 6-phosphate (Fru6P) and ammonium ion. This is Glucosamine-6-phosphate deaminase from Alkaliphilus oremlandii (strain OhILAs) (Clostridium oremlandii (strain OhILAs)).